We begin with the raw amino-acid sequence, 845 residues long: Extended synaptotagmin-2 (845 aa).

Residues 1 to 17 (MSSAGGEGPEAGPGRAG) show a composition bias toward gly residues. Positions 1–26 (MSSAGGEGPEAGPGRAGGRSEPEAPG) are disordered. Residues 1–27 (MSSAGGEGPEAGPGRAGGRSEPEAPGS) lie on the Cytoplasmic side of the membrane. The helical transmembrane segment at 28–48 (ALSVDLPGLLGQLARSFALLL) threads the bilayer. Residues 49 to 51 (PVY) lie on the Lumenal side of the membrane. A helical transmembrane segment spans residues 52–72 (ALGYLGLSFSWVLLALGLLAW). Residues 73–845 (CRRSRGLKAS…EDGTRPQVIT (773 aa)) are Cytoplasmic-facing. The region spanning 115 to 294 (DTERAEWLNK…LPNRITVPLV (180 aa)) is the SMP-LTD domain. 2 consecutive C2 domains span residues 293 to 413 (LVSE…DEWF) and 442 to 563 (VLAD…QLSN). Residues lysine 324, aspartate 325, aspartate 337, aspartate 384, glutamate 385, aspartate 386, aspartate 388, aspartate 390, and aspartate 391 each contribute to the Ca(2+) site. The tract at residues 584 to 664 (QERPPDYQHS…RDLGRSSSSL (81 aa)) is disordered. Polar residues predominate over residues 612 to 628 (SQMSASPGTGGANTAPS). Serine 615 and serine 617 each carry phosphoserine. Position 629 is a phosphothreonine (threonine 629). The segment covering 634–645 (VDDKPAMEEKPQ) has biased composition (basic and acidic residues). Serine 660, serine 662, serine 663, serine 667, serine 679, serine 682, and serine 685 each carry phosphoserine. Residues 710–832 (PLGQIQLTIR…ELAKGWTQWY (123 aa)) form the C2 3 domain. Positions 757–764 (KRRSGRRK) are required for phosphatidylinositol 4,5-bisphosphate-dependent location at the cell membrane.

Belongs to the extended synaptotagmin family. In terms of assembly, homodimer. Interacts with ESYT1 and ESYT3. Interacts with FGFR1 that has been activated by FGF1 binding. Interacts with the AP-2 complex; identified in a complex with the AP-2 complex and FGFR1.

It is found in the cell membrane. Its subcellular location is the endoplasmic reticulum membrane. In terms of biological role, tethers the endoplasmic reticulum to the cell membrane and promotes the formation of appositions between the endoplasmic reticulum and the cell membrane. Binds glycerophospholipids in a barrel-like domain and may play a role in cellular lipid transport. Plays a role in FGF signaling via its role in the rapid internalization of FGFR1 that has been activated by FGF1 binding; this occurs most likely via the AP-2 complex. Promotes the localization of SACM1L at endoplasmic reticulum-plasma membrane contact sites (EPCS). This chain is Extended synaptotagmin-2 (Esyt2), found in Mus musculus (Mouse).